The chain runs to 450 residues: Bifunctional protein GlmU (450 aa).

Residues 1-228 form a pyrophosphorylase region; that stretch reads MSTALVILAA…EAQTLGVNSR (228 aa). Residues 8 to 11, Lys-22, Gln-75, 80 to 81, 103 to 105, Gly-140, Glu-154, Asn-169, and Asn-226 each bind UDP-N-acetyl-alpha-D-glucosamine; these read LAAG, GT, and YGD. Asp-105 contributes to the Mg(2+) binding site. Residue Asn-226 coordinates Mg(2+). Positions 229–249 are linker; it reads ADLAAADAIFQTRARAELLDL. The N-acetyltransferase stretch occupies residues 250–450; it reads GVTLMAPETV…AKKASKQKET (201 aa). Residues Arg-315 and Lys-333 each contribute to the UDP-N-acetyl-alpha-D-glucosamine site. Residue His-345 is the Proton acceptor of the active site. UDP-N-acetyl-alpha-D-glucosamine is bound by residues Tyr-348 and Asn-359. Residues Ala-362, 368 to 369, Ser-387, Thr-405, and Arg-422 contribute to the acetyl-CoA site; that span reads NY.

In the N-terminal section; belongs to the N-acetylglucosamine-1-phosphate uridyltransferase family. The protein in the C-terminal section; belongs to the transferase hexapeptide repeat family. In terms of assembly, homotrimer. The cofactor is Mg(2+).

Its subcellular location is the cytoplasm. The enzyme catalyses alpha-D-glucosamine 1-phosphate + acetyl-CoA = N-acetyl-alpha-D-glucosamine 1-phosphate + CoA + H(+). The catalysed reaction is N-acetyl-alpha-D-glucosamine 1-phosphate + UTP + H(+) = UDP-N-acetyl-alpha-D-glucosamine + diphosphate. It participates in nucleotide-sugar biosynthesis; UDP-N-acetyl-alpha-D-glucosamine biosynthesis; N-acetyl-alpha-D-glucosamine 1-phosphate from alpha-D-glucosamine 6-phosphate (route II): step 2/2. It functions in the pathway nucleotide-sugar biosynthesis; UDP-N-acetyl-alpha-D-glucosamine biosynthesis; UDP-N-acetyl-alpha-D-glucosamine from N-acetyl-alpha-D-glucosamine 1-phosphate: step 1/1. The protein operates within bacterial outer membrane biogenesis; LPS lipid A biosynthesis. Catalyzes the last two sequential reactions in the de novo biosynthetic pathway for UDP-N-acetylglucosamine (UDP-GlcNAc). The C-terminal domain catalyzes the transfer of acetyl group from acetyl coenzyme A to glucosamine-1-phosphate (GlcN-1-P) to produce N-acetylglucosamine-1-phosphate (GlcNAc-1-P), which is converted into UDP-GlcNAc by the transfer of uridine 5-monophosphate (from uridine 5-triphosphate), a reaction catalyzed by the N-terminal domain. This Ruegeria pomeroyi (strain ATCC 700808 / DSM 15171 / DSS-3) (Silicibacter pomeroyi) protein is Bifunctional protein GlmU.